A 435-amino-acid polypeptide reads, in one-letter code: Zinc finger CCCH domain-containing protein 10 (435 aa).

Residues 1 to 36 (MPDRDSYANGTGSSGGGPGGGGSEEASGAGTGSGGA) are disordered. Residues 12 to 35 (GSSGGGPGGGGSEEASGAGTGSGG) are compositionally biased toward gly residues. 3 consecutive C3H1-type zinc fingers follow at residues 36–63 (ATSDAICRDFLRNVCKRGKRCRYRHPDM), 73–99 (KNEFIFCHDFQNKECSRPNCRFIHGSK), and 134–161 (KEEVPICRDFLKGDCQRGAKCKFRHLQR). The disordered stretch occupies residues 166-190 (DARGGGGTGGGGSTGSAPPGRRHDL). Over residues 168–179 (RGGGGTGGGGST) the composition is skewed to gly residues. 2 positions are modified to omega-N-methylarginine: R186 and R187. Positions 235–281 (GVECRLLEEENALLRKRVEELKKQVSNLLATNEVLLEQNAQFRNQAK) form a coiled coil. Positions 315-331 (TTLSSQALQPRPVSQQE) are enriched in polar residues. The segment at 315–363 (TTLSSQALQPRPVSQQELVAPTGAPAAPPTNAAPPAAPPPPPPHLNPEI) is disordered. Over residues 340-359 (AAPPTNAAPPAAPPPPPPHL) the composition is skewed to pro residues.

It is found in the nucleus. Functionally, specific regulator of miRNA biogenesis. Binds, via the C3H1-type zinc finger domains, to the binding motif 5'-GCAGCGC-3' on microRNA pri-MIR143 and negatively regulates the processing to mature microRNA. The protein is Zinc finger CCCH domain-containing protein 10 (Zc3h10) of Mus musculus (Mouse).